The following is a 152-amino-acid chain: Globin, minor (152 aa).

Positions 12–152 (VNNSYHKDLL…ALIAVVQAAL (141 aa)) constitute a Globin domain. Heme b is bound at residue His-104.

It belongs to the globin family.

This is Globin, minor from Anadara trapezia (Sydney cockle).